We begin with the raw amino-acid sequence, 348 residues long: Large ribosomal subunit protein uL3m (348 aa).

Residues 1 to 40 (MPGWRLLAWAGARVLDRGTGGLGTALGSGNRTDICVLVRS) constitute a mitochondrion transit peptide.

The protein belongs to the universal ribosomal protein uL3 family. As to quaternary structure, component of the mitochondrial ribosome large subunit (39S) which comprises a 16S rRNA and about 50 distinct proteins.

It localises to the mitochondrion. This chain is Large ribosomal subunit protein uL3m (MRPL3), found in Bos taurus (Bovine).